The primary structure comprises 425 residues: D-arabinitol transporter (425 aa).

The Cytoplasmic segment spans residues 1 to 7; that stretch reads MSINNKQ. A helical membrane pass occupies residues 8–28; that stretch reads WLGLPLNLLWGYIAIAVFMTG. Residues 29 to 51 are Extracellular-facing; it reads DGFELAFLSHYIKALGFSPAEAS. A helical transmembrane segment spans residues 52 to 72; the sequence is FAFTLYGLAAALSAWISGVVA. Residues 73-80 are Cytoplasmic-facing; it reads EIITPLKT. The chain crosses the membrane as a helical span at residues 81–101; the sequence is MMIGFVLWCVFHVLFLVFGLG. At 102 to 107 the chain is on the extracellular side; that stretch reads HANYAL. A helical transmembrane segment spans residues 108–128; that stretch reads ILLFYGIRGFAYPLFLYSFIV. The Cytoplasmic segment spans residues 129–141; the sequence is AIVHNVKSDNASS. Residues 142 to 162 traverse the membrane as a helical segment; sequence AIGWFWAVYSIGIGVFGSYIP. At 163–172 the chain is on the extracellular side; that stretch reads SFTIPHIGEM. The helical transmembrane segment at 173–193 threads the bilayer; the sequence is GTLWLALAFCLTGGVIALVSL. Over 194 to 237 the chain is Cytoplasmic; the sequence is RHIQTPQHMQNLTTREKFSELGRAATLLYTNRNILLSSMVRIIN. Residues 238 to 258 traverse the membrane as a helical segment; it reads TLSLFGFAVIMPMMFVDELGF. Residues 259–263 lie on the Extracellular side of the membrane; that stretch reads STSEW. A helical transmembrane segment spans residues 264 to 284; sequence LQVWAVFFFTTIFSNVLWGIL. The Cytoplasmic segment spans residues 285-295; it reads GEKLGWMKVVR. Residues 296-316 traverse the membrane as a helical segment; the sequence is WFGCIGMALSSLAFYYIPQHF. At 317–323 the chain is on the extracellular side; the sequence is GHSFAMA. Residues 324-344 form a helical membrane-spanning segment; it reads LIPAIALGIFVAAFVPLAAVF. Residues 345–360 lie on the Cytoplasmic side of the membrane; that stretch reads PALEPKHKGAAISVYN. Residues 361-381 form a helical membrane-spanning segment; it reads LSAGMSNFLAPAIAVVLLPFF. Over 382–383 the chain is Extracellular; the sequence is ST. Residues 384-404 form a helical membrane-spanning segment; that stretch reads IGVVIAYTALYVVAFFLCAFI. At 405-425 the chain is on the cytoplasmic side; that stretch reads RVEQPGFSHKEATAREQVEFS.

The protein belongs to the major facilitator superfamily. Sugar transporter (TC 2.A.1.1) family. CsbX subfamily.

The protein localises to the cell membrane. In Klebsiella pneumoniae, this protein is D-arabinitol transporter (dalT).